The following is a 146-amino-acid chain: DNA utilization protein HofO (146 aa).

Residues 20 to 37 (WAFWLLMLVTLIFLSSTH) form a helical membrane-spanning segment.

The protein resides in the cell inner membrane. Its function is as follows. Required for the use of extracellular DNA as a nutrient. The sequence is that of DNA utilization protein HofO (hofO) from Escherichia coli (strain K12).